Here is a 129-residue protein sequence, read N- to C-terminus: Small ribosomal subunit protein uS11 (129 aa).

It belongs to the universal ribosomal protein uS11 family. In terms of assembly, part of the 30S ribosomal subunit. Interacts with proteins S7 and S18. Binds to IF-3.

Functionally, located on the platform of the 30S subunit, it bridges several disparate RNA helices of the 16S rRNA. Forms part of the Shine-Dalgarno cleft in the 70S ribosome. This chain is Small ribosomal subunit protein uS11, found in Enterococcus faecalis (strain ATCC 700802 / V583).